Here is a 248-residue protein sequence, read N- to C-terminus: 2,3-bisphosphoglycerate-dependent phosphoglycerate mutase (248 aa).

Residues 8–15 (RHGESQWN), 21–22 (TG), Arg60, 87–90 (ERHY), Lys98, 114–115 (RR), and 183–184 (GN) contribute to the substrate site. The active-site Tele-phosphohistidine intermediate is His9. The active-site Proton donor/acceptor is the Glu87.

Belongs to the phosphoglycerate mutase family. BPG-dependent PGAM subfamily. As to quaternary structure, homodimer.

The catalysed reaction is (2R)-2-phosphoglycerate = (2R)-3-phosphoglycerate. Its pathway is carbohydrate degradation; glycolysis; pyruvate from D-glyceraldehyde 3-phosphate: step 3/5. Functionally, catalyzes the interconversion of 2-phosphoglycerate and 3-phosphoglycerate. This Alteromonas mediterranea (strain DSM 17117 / CIP 110805 / LMG 28347 / Deep ecotype) protein is 2,3-bisphosphoglycerate-dependent phosphoglycerate mutase.